Here is a 512-residue protein sequence, read N- to C-terminus: MGCCQSLFSGDNPLGKDGVQPQPLSQNNHGGATTADNGGSGGASGVGGGGGGGGIPSFSEFSFADLKAATNNFSSDNIVSESGEKAPNLVYKGRLQNRRWIAVKKFTKMAWPEPKQFAEEAWGVGKLRHNRLANLIGYCCDGDERLLVAEFMPNDTLAKHLFHWENQTIEWAMRLRVGYYIAEALDYCSTEGRPLYHDLNAYRVLFDEDGDPRLSCFGLMKNSRDGKSYSTNLAYTPPEYLRNGRVTPESVTYSFGTVLLDLLSGKHIPPSHALDMIRGKNIILLMDSHLEGKFSTEEATVVVELASQCLQYEPRERPNTKDLVATLAPLQTKSDVPSYVMLGIKKQEEAPSTPQRPLSPLGEACSRMDLTAIHQILVMTHYRDDEGTNELSFQEWTQQMKDMLDARKRGDQSFREKDFKTAIDCYSQFIDVGTMVSPTVFGRRSLCYLLCDQPDAALRDAMQAQCVYPDWPTAFYMQSVALAKLNMNTDAADMLNEAAQLEEKRQRGGRGS.

Residue Gly2 is the site of N-myristoyl glycine attachment. The interval 8–48 (FSGDNPLGKDGVQPQPLSQNNHGGATTADNGGSGGASGVGG) is disordered. Gly residues predominate over residues 38–48 (GGSGGASGVGG). The Protein kinase domain maps to 76–331 (DNIVSESGEK…DLVATLAPLQ (256 aa)). Residues 82–90 (SGEKAPNLV) and Lys104 each bind ATP. The active-site Proton acceptor is Asp198. Ser230 carries the post-translational modification Phosphoserine. The stretch at 483 to 508 (AKLNMNTDAADMLNEAAQLEEKRQRG) forms a coiled coil.

This sequence belongs to the protein kinase superfamily. Ser/Thr protein kinase family. Interacts with BRI1. Interacts with ASK7/BIN2, BSK5, BSK6, BSK8 and BSK11. Interacts with FLS2. In terms of processing, phosphorylated at Ser-230 by BRI1 upon brassinolide (BL) treatment. Phosphorylation at Ser-230 weakens the interaction between BSK1 and BRI1. Phosphorylated by ASK7/BIN2 and ASK9/BIL2.

It is found in the cell membrane. The catalysed reaction is L-seryl-[protein] + ATP = O-phospho-L-seryl-[protein] + ADP + H(+). The enzyme catalyses L-threonyl-[protein] + ATP = O-phospho-L-threonyl-[protein] + ADP + H(+). Its function is as follows. Serine/threonine kinase that acts as a positive regulator of brassinosteroid (BR) signaling downstream of the receptor kinase BRI1. Mediates signal transduction from BRI1 by functioning as substrate of BRI1. Functions as a positive regulator of plant immunity. May be involved in the regulation of pattern-triggered immunity (PTI) downstream of the flagellin receptor FLS2. Possesses kinase activity in vitro. Kinase activity is required for its function in innate immunity. The polypeptide is Serine/threonine-protein kinase BSK1 (Arabidopsis thaliana (Mouse-ear cress)).